A 243-amino-acid chain; its full sequence is PF03932 family protein CutC (243 aa).

The protein belongs to the CutC family.

The protein localises to the cytoplasm. The protein is PF03932 family protein CutC of Parabacteroides distasonis (strain ATCC 8503 / DSM 20701 / CIP 104284 / JCM 5825 / NCTC 11152).